A 323-amino-acid chain; its full sequence is Beta-ketoacyl-[acyl-carrier-protein] synthase III (323 aa).

Active-site residues include Cys113 and His250. The ACP-binding stretch occupies residues 251-255 (QANKR). Residue Asn280 is part of the active site.

It belongs to the thiolase-like superfamily. FabH family. As to quaternary structure, homodimer.

Its subcellular location is the cytoplasm. The catalysed reaction is malonyl-[ACP] + acetyl-CoA + H(+) = 3-oxobutanoyl-[ACP] + CO2 + CoA. Its pathway is lipid metabolism; fatty acid biosynthesis. Its function is as follows. Catalyzes the condensation reaction of fatty acid synthesis by the addition to an acyl acceptor of two carbons from malonyl-ACP. Catalyzes the first condensation reaction which initiates fatty acid synthesis and may therefore play a role in governing the total rate of fatty acid production. Possesses both acetoacetyl-ACP synthase and acetyl transacylase activities. Its substrate specificity determines the biosynthesis of branched-chain and/or straight-chain of fatty acids. This chain is Beta-ketoacyl-[acyl-carrier-protein] synthase III, found in Brucella anthropi (strain ATCC 49188 / DSM 6882 / CCUG 24695 / JCM 21032 / LMG 3331 / NBRC 15819 / NCTC 12168 / Alc 37) (Ochrobactrum anthropi).